The sequence spans 363 residues: Ribosomal RNA large subunit methyltransferase M (363 aa).

Residues serine 187, 220 to 223, aspartate 239, aspartate 259, and aspartate 276 each bind S-adenosyl-L-methionine; that span reads CPGG. The Proton acceptor role is filled by lysine 305.

It belongs to the class I-like SAM-binding methyltransferase superfamily. RNA methyltransferase RlmE family. RlmM subfamily. Monomer.

It localises to the cytoplasm. The enzyme catalyses cytidine(2498) in 23S rRNA + S-adenosyl-L-methionine = 2'-O-methylcytidine(2498) in 23S rRNA + S-adenosyl-L-homocysteine + H(+). Functionally, catalyzes the 2'-O-methylation at nucleotide C2498 in 23S rRNA. The sequence is that of Ribosomal RNA large subunit methyltransferase M from Shewanella loihica (strain ATCC BAA-1088 / PV-4).